The following is a 256-amino-acid chain: Anamorsin homolog (256 aa).

The segment at 1 to 136 (MNSLSLELNK…DTNESSTINI (136 aa)) is N-terminal SAM-like domain. A disordered region spans residues 126 to 148 (WDTNESSTINIPSTSSNNPWASI). Positions 131-144 (SSTINIPSTSSNNP) are enriched in low complexity. Residues 137–166 (PSTSSNNPWASIEGGDRINENDLVSENDKT) form a linker region. The [2Fe-2S] cluster site is built by cysteine 176, cysteine 185, cysteine 188, and cysteine 190. A fe-S binding site A region spans residues 176–190 (CEVGKTKKACKNCTC). Residues cysteine 217, cysteine 220, cysteine 228, and cysteine 231 each contribute to the [4Fe-4S] cluster site. 2 short sequence motifs (cx2C motif) span residues 217–220 (CGNC) and 228–231 (CGGC). The tract at residues 217 to 231 (CGNCSLGDAFRCGGC) is fe-S binding site B.

Belongs to the anamorsin family. Monomer. It depends on [2Fe-2S] cluster as a cofactor. Requires [4Fe-4S] cluster as cofactor.

Its subcellular location is the cytoplasm. It is found in the mitochondrion intermembrane space. Component of the cytosolic iron-sulfur (Fe-S) protein assembly (CIA) machinery. Required for the maturation of extramitochondrial Fe-S proteins. Part of an electron transfer chain functioning in an early step of cytosolic Fe-S biogenesis, facilitating the de novo assembly of a [4Fe-4S] cluster on the cytosolic Fe-S scaffold complex. Electrons are transferred from NADPH via a FAD- and FMN-containing diflavin oxidoreductase. Together with the diflavin oxidoreductase, also required for the assembly of the diferric tyrosyl radical cofactor of ribonucleotide reductase (RNR), probably by providing electrons for reduction during radical cofactor maturation in the catalytic small subunit. The sequence is that of Anamorsin homolog (rsc43) from Dictyostelium discoideum (Social amoeba).